Reading from the N-terminus, the 494-residue chain is Ubiquitin carboxyl-terminal hydrolase 27 (494 aa).

A helical membrane pass occupies residues 30 to 50 (LSFAGLLGVAGFVFAQQHGLF). The region spanning 74–494 (PGLQNLGNNC…EASLLFYERL (421 aa)) is the USP domain. C83 serves as the catalytic Nucleophile. The active-site Proton acceptor is H440.

This sequence belongs to the peptidase C19 family.

Its subcellular location is the membrane. The catalysed reaction is Thiol-dependent hydrolysis of ester, thioester, amide, peptide and isopeptide bonds formed by the C-terminal Gly of ubiquitin (a 76-residue protein attached to proteins as an intracellular targeting signal).. Functionally, recognizes and hydrolyzes the peptide bond at the C-terminal Gly of ubiquitin. Involved in the processing of poly-ubiquitin precursors as well as that of ubiquitinated proteins. The protein is Ubiquitin carboxyl-terminal hydrolase 27 (UBP27) of Arabidopsis thaliana (Mouse-ear cress).